Consider the following 212-residue polypeptide: Glycerol-3-phosphate acyltransferase (212 aa).

A run of 6 helical transmembrane segments spans residues 6–26, 56–76, 92–112, 122–142, 150–170, and 171–191; these read IAVLIFTMGYLLGSVPFGLIL, LAALTLFFDIGKGALAVLLAH, LTLIAGAAAFLGHCYPVWLGF, LGVSFAAWWVAGVVFAVAWLL, SSVGGMVGAIAATISVMFMPA, and SHEIHQVYIALFSGMTILLLW.

The protein belongs to the PlsY family. In terms of assembly, probably interacts with PlsX.

The protein resides in the cell inner membrane. The catalysed reaction is an acyl phosphate + sn-glycerol 3-phosphate = a 1-acyl-sn-glycero-3-phosphate + phosphate. Its pathway is lipid metabolism; phospholipid metabolism. In terms of biological role, catalyzes the transfer of an acyl group from acyl-phosphate (acyl-PO(4)) to glycerol-3-phosphate (G3P) to form lysophosphatidic acid (LPA). This enzyme utilizes acyl-phosphate as fatty acyl donor, but not acyl-CoA or acyl-ACP. The polypeptide is Glycerol-3-phosphate acyltransferase (Zymomonas mobilis subsp. mobilis (strain ATCC 31821 / ZM4 / CP4)).